Here is a 546-residue protein sequence, read N- to C-terminus: MRSKKTKFIFVTGGVVSSLGKGLASASIGALLENRGLAVTLIKLDPYINVDPGTMSPFQHGEVFVTEDGGETDMDLGHYERFTNARMSRLNNFTSGRIYHAVIMKERRGEYLGKTVQVIPHVTDEIKSSIRQAAQDADVVIVEVGGTVGDIESLPFLEAIRQMRYDVGNENVVYVHLTLLPYIGAAGEVKTKPTQHSVMKLREIGIQPDFLVCRTDREVPRELKDKIAMFCNVDTRSVFTSPDVRSTYELPLELHRQGLDERLAEVLNIWSRAPHLERWENIIRKVYEPARGQVRIAIVGKYVNLTESYKSLNEALLHGGIANDVKVNLHFVDSQEVEEQGAEKLLAGVDAILVPGGFGVRGTEGKIAAVRYAREKKVPFFGICLGLQMAVVEFSRGVLGLSSANSLEFNEHTPHPVVTLMESQVKVQDKGGTMRLGSYACALKPGSLAHQLYGQDTIQERHRHRYEVNNAYRSKLQEAGLVISGSNPELNLVEMIELADHPYFIGCQFHPEFKSKPFAPHPLFSGFIRAALAQRDANAAAGKVTE.

The segment at 1–269 (MRSKKTKFIF…DERLAEVLNI (269 aa)) is amidoligase domain. Ser-17 contributes to the CTP binding site. Ser-17 serves as a coordination point for UTP. ATP is bound by residues 18–23 (SLGKGL) and Asp-75. 2 residues coordinate Mg(2+): Asp-75 and Glu-143. CTP is bound by residues 150 to 152 (DIE), 190 to 195 (KTKPTQ), and Lys-226. Residues 190 to 195 (KTKPTQ) and Lys-226 contribute to the UTP site. Residues 295-537 (RIAIVGKYVN…IRAALAQRDA (243 aa)) form the Glutamine amidotransferase type-1 domain. Residue Gly-357 coordinates L-glutamine. Catalysis depends on Cys-384, which acts as the Nucleophile; for glutamine hydrolysis. L-glutamine-binding positions include 385–388 (LGLQ), Glu-408, and Arg-465. Active-site residues include His-510 and Glu-512.

This sequence belongs to the CTP synthase family. Homotetramer.

It carries out the reaction UTP + L-glutamine + ATP + H2O = CTP + L-glutamate + ADP + phosphate + 2 H(+). The enzyme catalyses L-glutamine + H2O = L-glutamate + NH4(+). It catalyses the reaction UTP + NH4(+) + ATP = CTP + ADP + phosphate + 2 H(+). The protein operates within pyrimidine metabolism; CTP biosynthesis via de novo pathway; CTP from UDP: step 2/2. Allosterically activated by GTP, when glutamine is the substrate; GTP has no effect on the reaction when ammonia is the substrate. The allosteric effector GTP functions by stabilizing the protein conformation that binds the tetrahedral intermediate(s) formed during glutamine hydrolysis. Inhibited by the product CTP, via allosteric rather than competitive inhibition. In terms of biological role, catalyzes the ATP-dependent amination of UTP to CTP with either L-glutamine or ammonia as the source of nitrogen. Regulates intracellular CTP levels through interactions with the four ribonucleotide triphosphates. This chain is CTP synthase, found in Myxococcus xanthus (strain DK1622).